A 151-amino-acid chain; its full sequence is 1,4-dihydroxy-2-naphthoyl-CoA hydrolase (151 aa).

Residue Asp-23 is part of the active site.

The protein belongs to the 4-hydroxybenzoyl-CoA thioesterase family. DHNA-CoA hydrolase subfamily.

It carries out the reaction 1,4-dihydroxy-2-naphthoyl-CoA + H2O = 1,4-dihydroxy-2-naphthoate + CoA + H(+). It participates in cofactor biosynthesis; phylloquinone biosynthesis. Its pathway is quinol/quinone metabolism; 1,4-dihydroxy-2-naphthoate biosynthesis; 1,4-dihydroxy-2-naphthoate from chorismate: step 7/7. Its function is as follows. Catalyzes the hydrolysis of 1,4-dihydroxy-2-naphthoyl-CoA (DHNA-CoA) to 1,4-dihydroxy-2-naphthoate (DHNA), a reaction involved in phylloquinone (vitamin K1) biosynthesis. The sequence is that of 1,4-dihydroxy-2-naphthoyl-CoA hydrolase from Prochlorococcus marinus (strain MIT 9211).